A 352-amino-acid chain; its full sequence is Selenide, water dikinase (352 aa).

Cysteine 23 is a catalytic residue. ATP-binding positions include lysine 26 and 54 to 56 (SRD). Aspartate 57 is a binding site for Mg(2+). ATP contacts are provided by residues aspartate 74, aspartate 97, and 145–147 (GHS). Aspartate 97 is a Mg(2+) binding site. A Mg(2+)-binding site is contributed by aspartate 233.

Belongs to the selenophosphate synthase 1 family. Class I subfamily. In terms of assembly, homodimer. Mg(2+) serves as cofactor.

The catalysed reaction is hydrogenselenide + ATP + H2O = selenophosphate + AMP + phosphate + 2 H(+). Synthesizes selenophosphate from selenide and ATP. In Shewanella baltica (strain OS155 / ATCC BAA-1091), this protein is Selenide, water dikinase.